Reading from the N-terminus, the 214-residue chain is Ras-related protein Rab-11A (214 aa).

GTP is bound by residues 20–28 (GDSGVGKSN), 39–45 (SLETKST), 68–72 (DTAGQ), 126–129 (NKSD), and 156–158 (SAL). The Effector region signature appears at 42-50 (TKSTIGVEF). S-geranylgeranyl cysteine attachment occurs at residues Cys213 and Cys214.

Belongs to the small GTPase superfamily. Rab family.

Its subcellular location is the contractile vacuole membrane. In terms of biological role, required for normal contractile vacuole structure and function. Cells expressing a dominant negative rab11A exhibit a more extensive contractile vacuole network and enlarged contractile vacuole bladders. These cells exhibit a functional defect in osmotic regulation where cells immersed in water become rounded and detach from the surface, and contain swollen contractile vacuoles. This chain is Ras-related protein Rab-11A (rab11A), found in Dictyostelium discoideum (Social amoeba).